A 674-amino-acid chain; its full sequence is Protein asunder (674 aa).

A coiled-coil region spans residues 516–538 (HKAKDQYRLLYRELEQLIQLNAS). The interval 560 to 579 (PSKSEAGTANLRSFTESPLS) is disordered. The segment covering 564-577 (EAGTANLRSFTESP) has biased composition (polar residues). The short motif at 601 to 607 (LKASKRR) is the Nuclear localization signal (NLS) element.

It belongs to the Integrator subunit 13 family. In terms of assembly, belongs to the multiprotein complex Integrator, at least composed of IntS1, IntS2, IntS3, IntS4, omd/IntS5, IntS6, defl/IntS7, IntS8, IntS9, IntS10, IntS11, IntS12, asun/IntS13, IntS14 and IntS15. The core complex associates with protein phosphatase 2A subunits mts/PP2A and Pp2A-29B, to form the Integrator-PP2A (INTAC) complex. In terms of processing, phosphorylated.

The protein resides in the nucleus. It localises to the cytoplasm. It is found in the perinuclear region. Component of the integrator complex, a multiprotein complex that terminates RNA polymerase II (Pol II) transcription in the promoter-proximal region of genes. The integrator complex provides a quality checkpoint during transcription elongation by driving premature transcription termination of transcripts that are unfavorably configured for transcriptional elongation: the complex terminates transcription by (1) catalyzing dephosphorylation of the C-terminal domain (CTD) of Pol II subunit Polr2A/Rbp1 and Spt5, and (2) degrading the exiting nascent RNA transcript via endonuclease activity. The integrator complex is also involved in the 3'-end processing of the U7 snRNA, and also the spliceosomal snRNAs U1, U2, U4 and U5. The polypeptide is Protein asunder (asun) (Drosophila pseudoobscura pseudoobscura (Fruit fly)).